A 491-amino-acid polypeptide reads, in one-letter code: MNRTKGDEEEYWNSSKFKAFTFDDEDDELSQLKESKRAVNSLRDIVDDDDDDDLERVSWTGEPVGSISWSIKETAGSSGSTPEGREQLKGRNSFYTQLPKPPSTYSLSSFFRGRTRPGSFQSLSDALSDTPAKSYAPELGRPKGEYRDYSNDWSLSDTVQRLRRGKVCSLERFRSLQDKLQLLEEAVSMHDGNVITAVLIFLKRTLSKEILFRELEVRQVALRHLIHFLKEIGDQKLLLDLFRFLDRAEELALSHYREHLNIQDPEKRKEFLKTCIGLPFSAEDAAHVQDHYTLLERQIIIEANDRHLESSGQTDIFRKHPRKASILNMPLVTTLFYACFYHYTESEGTFSSPINLKKTFKIPDKQYVLTALAARAKLRAWNDVDALFTTKNWLGYTKKRAPIGFHRVVEILHKNSAPVQILQEYVNLVEDVDTKLNLATKFKCHDVVIDTCRDLKDRQQLLAYRSKVDKGSAEEEKIDAILSSSQIRWKN.

Residue Thr-21 is modified to Phosphothreonine. A compositionally biased stretch (polar residues) spans Lys-72–Thr-81. Residues Lys-72–Pro-101 are disordered. Thr-115 carries the post-translational modification Phosphothreonine. Residues Ser-119, Ser-122, and Ser-128 each carry the phosphoserine modification. Residues Gln-121–Arg-141 are disordered. Thr-130 is modified (phosphothreonine).

It belongs to the SPE39 family. In terms of assembly, interacts with VPS33B. Associates with the homotypic fusion and vacuole protein sorting (HOPS) complex; impaired by VPS33B. Interacts with RAB11A.

The protein resides in the cytoplasm. The protein localises to the cytoplasmic vesicle. It localises to the early endosome. It is found in the recycling endosome. Its subcellular location is the late endosome. Its function is as follows. Proposed to be involved in endosomal maturation implicating in part VPS33B. In epithelial cells, the VPS33B:VIPAS39 complex may play a role in the apical RAB11A-dependent recycling pathway and in the maintenance of the apical-basolateral polarity. May play a role in lysosomal trafficking, probably via association with the core HOPS complex in a discrete population of endosomes; the functions seems to be independent of VPS33B. May play a role in vesicular trafficking during spermatogenesis. May be involved in direct or indirect transcriptional regulation of E-cadherin. The polypeptide is Spermatogenesis-defective protein 39 homolog (Vipas39) (Mus musculus (Mouse)).